The chain runs to 215 residues: Small ribosomal subunit protein uS7 (215 aa).

This sequence belongs to the universal ribosomal protein uS7 family. As to quaternary structure, part of the 30S ribosomal subunit.

Its function is as follows. One of the primary rRNA binding proteins, it binds directly to 16S rRNA where it nucleates assembly of the head domain of the 30S subunit. Is located at the subunit interface close to the decoding center. This Thermococcus onnurineus (strain NA1) protein is Small ribosomal subunit protein uS7.